The chain runs to 417 residues: UDP-N-acetylglucosamine 1-carboxyvinyltransferase 2 (417 aa).

22–23 is a phosphoenolpyruvate binding site; sequence KN. Arg92 serves as a coordination point for UDP-N-acetyl-alpha-D-glucosamine. Residue Cys116 is the Proton donor of the active site. The residue at position 116 (Cys116) is a 2-(S-cysteinyl)pyruvic acid O-phosphothioketal. UDP-N-acetyl-alpha-D-glucosamine contacts are provided by residues 121-125, Asp305, and Ile327; that span reads RPIDL.

Belongs to the EPSP synthase family. MurA subfamily.

Its subcellular location is the cytoplasm. The catalysed reaction is phosphoenolpyruvate + UDP-N-acetyl-alpha-D-glucosamine = UDP-N-acetyl-3-O-(1-carboxyvinyl)-alpha-D-glucosamine + phosphate. It functions in the pathway cell wall biogenesis; peptidoglycan biosynthesis. Cell wall formation. Adds enolpyruvyl to UDP-N-acetylglucosamine. The polypeptide is UDP-N-acetylglucosamine 1-carboxyvinyltransferase 2 (Caldanaerobacter subterraneus subsp. tengcongensis (strain DSM 15242 / JCM 11007 / NBRC 100824 / MB4) (Thermoanaerobacter tengcongensis)).